The primary structure comprises 309 residues: Calcium homeostasis modulator protein 5 (309 aa).

The Cytoplasmic segment spans residues 1-15 (MDAFQSILKFFLNQK). Residues 16–37 (TAIGYSFMALLTVGSERLFSLV) form a helical membrane-spanning segment. A 1,2-diacyl-sn-glycero-3-phosphate contacts are provided by R32 and V37. At 38–45 (AFKCPCSI) the chain is on the extracellular side. Disulfide bonds link C41-C127, C43-C158, and C142-C149. A helical transmembrane segment spans residues 46 to 70 (ENTAYGLVFLFAPAWVLLILGFFLN). The Cytoplasmic portion of the chain corresponds to 71 to 99 (NKAWRLFTGCCMNPQKIFPRRRCCRFFYV). Residues 100–129 (LGHITLSSLVAPVMWLSVALLNGTFYECAM) form a helical membrane-spanning segment. N121 lines the a 1,2-diacyl-sn-glycero-3-phosphate pocket. Residues 130 to 174 (SGTRSTRLLEMICKGKPKECWEELHKVSCGKSSMAAMDSEEVRLS) lie on the Extracellular side of the membrane. The chain crosses the membrane as a helical span at residues 175–200 (LQAQSQILGWCLICSASFFSLLTTCY). Residues 201 to 309 (ARCRSKVSYL…MILVGTAQSL (109 aa)) lie on the Cytoplasmic side of the membrane. R202 contacts a 1,2-diacyl-sn-glycero-3-phosphate.

This sequence belongs to the CALHM family. Oligomerizes to form undecameric cone-shaped channels.

It localises to the membrane. May assemble to form large pore channels with gating and ion conductance likely regulated by membrane lipids. The polypeptide is Calcium homeostasis modulator protein 5 (Rattus norvegicus (Rat)).